A 620-amino-acid polypeptide reads, in one-letter code: Cilia- and flagella-associated protein 52 (620 aa).

WD repeat units lie at residues 62-106 (GHSN…LMAR), 109-150 (LHKG…AICG), 156-195 (LNVG…RKIW), 203-242 (QMKR…LADT), 288-327 (QLQG…ETLV), 330-369 (CHFE…ELLR), 372-411 (VPNM…LMYV), 415-454 (AHRI…QKLE), 459-498 (EHKS…RNQM), 500-539 (LANT…GIRE), 543-582 (SLSG…VTHV), and 585-620 (GHSG…PFPS).

The protein belongs to the CFAP52 family. As to quaternary structure, microtubule inner protein component of sperm flagellar doublet microtubules. Interacts with BRCA2. Interacts with the CCT chaperonin complex. Interacts with HSP70. Interacts with AK8. Interacts with CFAP45. Interacts with DNAI1. Interacts with IQDC. Expressed in respiratory cells and sperm (at protein level).

Its subcellular location is the cytoplasm. It is found in the cytoskeleton. The protein localises to the cilium axoneme. The protein resides in the flagellum axoneme. Its function is as follows. Microtubule inner protein (MIP) part of the dynein-decorated doublet microtubules (DMTs) in cilia axoneme. Important for proper ciliary and flagellar beating. May act in cooperation with CFAP45 and axonemal dynein subunit DNAH11. May play a role in cell growth and/or survival. This is Cilia- and flagella-associated protein 52 (CFAP52) from Sus scrofa (Pig).